The chain runs to 310 residues: Deoxypodophyllotoxin synthase (310 aa).

The Fe2OG dioxygenase domain occupies 159 to 258 (STNYLLHFMR…RLSTSSFSFP (100 aa)). Residues His184, Asp186, and His239 each contribute to the Fe cation site. Arg249 contributes to the 2-oxoglutarate binding site.

Belongs to the iron/ascorbate-dependent oxidoreductase family. Fe(2+) serves as cofactor. Mostly expressed in leaves and stems.

It carries out the reaction (-)-yatein + 2-oxoglutarate + O2 = (-)-deoxypodophyllotoxin + succinate + CO2 + H2O. Its pathway is aromatic compound metabolism; phenylpropanoid biosynthesis. 2-oxoglutarate-dependent dioxygenase involved in the biosynthesis of etoposide, a chemotherapeutic compound of the topoisomerase inhibitor family. Catalyzes the conversion of yatein to deoxypodophyllotoxin. Can also use, to some extent, demethylyatein as substrate. The sequence is that of Deoxypodophyllotoxin synthase from Sinopodophyllum hexandrum (Himalayan may apple).